A 145-amino-acid chain; its full sequence is Small ribosomal subunit protein uS15 (145 aa).

It belongs to the universal ribosomal protein uS15 family. Part of the 30S ribosomal subunit.

The sequence is that of Small ribosomal subunit protein uS15 from Thermoplasma acidophilum (strain ATCC 25905 / DSM 1728 / JCM 9062 / NBRC 15155 / AMRC-C165).